Consider the following 158-residue polypeptide: Endoribonuclease YbeY (158 aa).

His124, His128, and His134 together coordinate Zn(2+).

Belongs to the endoribonuclease YbeY family. Zn(2+) serves as cofactor.

Its subcellular location is the cytoplasm. Functionally, single strand-specific metallo-endoribonuclease involved in late-stage 70S ribosome quality control and in maturation of the 3' terminus of the 16S rRNA. The protein is Endoribonuclease YbeY of Caldanaerobacter subterraneus subsp. tengcongensis (strain DSM 15242 / JCM 11007 / NBRC 100824 / MB4) (Thermoanaerobacter tengcongensis).